A 538-amino-acid polypeptide reads, in one-letter code: Methionine--tRNA ligase (538 aa).

The 'HIGH' region signature appears at 21–31; the sequence is YYVNDAPHLGH. Cys-137, Cys-140, Cys-162, and His-165 together coordinate Zn(2+). Positions 313–317 match the 'KMSKS' region motif; that stretch reads KMSKS. Residue Lys-316 coordinates ATP.

It belongs to the class-I aminoacyl-tRNA synthetase family. MetG type 2A subfamily. In terms of assembly, monomer. Requires Zn(2+) as cofactor.

It localises to the cytoplasm. The enzyme catalyses tRNA(Met) + L-methionine + ATP = L-methionyl-tRNA(Met) + AMP + diphosphate. In terms of biological role, is required not only for elongation of protein synthesis but also for the initiation of all mRNA translation through initiator tRNA(fMet) aminoacylation. The chain is Methionine--tRNA ligase from Streptomyces coelicolor (strain ATCC BAA-471 / A3(2) / M145).